A 475-amino-acid polypeptide reads, in one-letter code: UDP-glycosyltransferase 76E1 (475 aa).

Catalysis depends on His19, which acts as the Proton acceptor. His19 contributes to the an anthocyanidin binding site. The active-site Charge relay is Asp109. Residues Thr131, Ala329, Gln331, His346, Trp349, Asn350, Ser351, and Glu354 each contribute to the UDP-alpha-D-glucose site. Ala369 is an an anthocyanidin binding site. Positions 370 and 371 each coordinate UDP-alpha-D-glucose.

This sequence belongs to the UDP-glycosyltransferase family. Expressed in flowers and fruits.

Its subcellular location is the cytoplasm. It is found in the nucleus. The catalysed reaction is 2-cis-(+)-abscisate + UDP-alpha-D-glucose = beta-D-glucopyranosyl cis-(+)-abscisate + UDP. Functionally, glucosyltransferase acting on abscisic acid (ABA) but not on auxin (IAA). The sequence is that of UDP-glycosyltransferase 76E1 from Solanum lycopersicum (Tomato).